The primary structure comprises 718 residues: Polyphosphate kinase (718 aa).

ATP is bound at residue N47. 2 residues coordinate Mg(2+): R372 and R402. The Phosphohistidine intermediate role is filled by H432. Residues Y465, R561, and H589 each contribute to the ATP site. The disordered stretch occupies residues 683 to 718 (KADHGDTTPTSNAHQFIPMMSPKNEPDASDLDREDD). Acidic residues predominate over residues 709–718 (DASDLDREDD).

Belongs to the polyphosphate kinase 1 (PPK1) family. Mg(2+) is required as a cofactor. Post-translationally, an intermediate of this reaction is the autophosphorylated ppk in which a phosphate is covalently linked to a histidine residue through a N-P bond.

It carries out the reaction [phosphate](n) + ATP = [phosphate](n+1) + ADP. Its function is as follows. Catalyzes the reversible transfer of the terminal phosphate of ATP to form a long-chain polyphosphate (polyP). The chain is Polyphosphate kinase from Lactiplantibacillus plantarum (strain ATCC BAA-793 / NCIMB 8826 / WCFS1) (Lactobacillus plantarum).